The sequence spans 942 residues: Diacylglycerol kinase theta (942 aa).

Residues 1–59 (MAAAAEPGARAWLGGGSPRPGSPACSPVLGSGGRARPGPGPGPGPERAGVRAPGPAAAP) are disordered. 2 positions are modified to phosphoserine: S22 and S26. Over residues 45–59 (PERAGVRAPGPAAAP) the composition is skewed to low complexity. Phorbol-ester/DAG-type zinc fingers lie at residues 60–108 (GHSF…RIPC), 121–168 (AHCF…CSDC), and 183–234 (HHHW…APEC). The segment at 269–295 (EPGEGGDGADGSAAVGPGRETQATPES) is disordered. A Ras-associating domain is found at 395-494 (AQEVLKIYPG…TRFYVAESRD (100 aa)). Short sequence motifs (LXXLL motif) lie at residues 555–559 (LYMLL) and 574–578 (LPDLL). Residues 584-721 (PDSCPLLVFV…MDRWTILLDA (138 aa)) form the DAGKc domain. Residues 908-942 (PKVHMLRKAKQKPRRAGTTRDARADAAPAPESDPR) are disordered. Basic residues predominate over residues 911-924 (HMLRKAKQKPRRAG). Residues 932–942 (DAAPAPESDPR) show a composition bias toward low complexity.

This sequence belongs to the eukaryotic diacylglycerol kinase family. As to quaternary structure, interacts with RHOA (constitutively activated, GTP-bound); the interaction inhibits DGKQ. Interacts with PRKCE. Interacts with PRKCH. Interacts with PLCB1. Interacts with NR5A1; the interaction requires both LXXLL motifs in DGKQ and is required for full phosphatidic acid-mediated activation of NR5A1. In terms of processing, phosphorylated by PRKCE and PRKCH in vitro.

The protein resides in the cytoplasm. It localises to the cytosol. Its subcellular location is the cell membrane. The protein localises to the synapse. It is found in the cytoskeleton. The protein resides in the nucleus. It localises to the nucleus speckle. Its subcellular location is the nucleus matrix. The enzyme catalyses a 1,2-diacyl-sn-glycerol + ATP = a 1,2-diacyl-sn-glycero-3-phosphate + ADP + H(+). The catalysed reaction is a 1-O-alkyl-sn-glycerol + ATP = a 1-O-alkyl-sn-glycero-3-phosphate + ADP + H(+). It catalyses the reaction 1-O-alkyl-2-acyl-sn-glycerol + ATP = 1-O-alkyl-2-acyl-sn-glycero-3-phosphate + ADP + H(+). It carries out the reaction 1,2-di-(9Z-octadecenoyl)-sn-glycerol + ATP = 1,2-di-(9Z-octadecenoyl)-sn-glycero-3-phosphate + ADP + H(+). The enzyme catalyses 1-O-hexadecyl-sn-glycerol + ATP = 1-O-hexadecyl-sn-glycero-3-phosphate + ADP + H(+). The catalysed reaction is 1-O-hexadecyl-2-acetyl-sn-glycerol + ATP = 1-O-hexadecyl-2-acetyl-sn-glycero-3-phosphate + ADP + H(+). It catalyses the reaction 1-octadecanoyl-2-(5Z,8Z,11Z,14Z-eicosatetraenoyl)-sn-glycerol + ATP = 1-octadecanoyl-2-(5Z,8Z,11Z,14Z-eicosatetraenoyl)-sn-glycero-3-phosphate + ADP + H(+). The protein operates within lipid metabolism; glycerolipid metabolism. Its activity is regulated as follows. Activated by phosphatidylserine. Its function is as follows. Diacylglycerol kinase that converts diacylglycerol/DAG into phosphatidic acid/phosphatidate/PA and regulates the respective levels of these two bioactive lipids. Thereby, acts as a central switch between the signaling pathways activated by these second messengers with different cellular targets and opposite effects in numerous biological processes. Within the adrenocorticotropic hormone signaling pathway, produces phosphatidic acid which in turn activates NR5A1 and subsequent steroidogenic gene transcription. Also functions downstream of the nerve growth factor signaling pathway being specifically activated in the nucleus by the growth factor. Through its diacylglycerol activity also regulates synaptic vesicle endocytosis. This is Diacylglycerol kinase theta from Homo sapiens (Human).